Reading from the N-terminus, the 334-residue chain is GTPase Obg (334 aa).

The Obg domain maps to 1-159; sequence MRFVDEVVIK…KEVRLELNLL (159 aa). One can recognise an OBG-type G domain in the interval 160 to 331; it reads ADVALLGLPN…LAKKLNEFLQ (172 aa). Residues 166–173, 191–195, 212–215, 282–285, and 312–314 contribute to the GTP site; these read GLPNAGKS, FTTMY, DIPG, NKID, and SAA. Mg(2+) is bound by residues S173 and T193.

This sequence belongs to the TRAFAC class OBG-HflX-like GTPase superfamily. OBG GTPase family. In terms of assembly, monomer. The cofactor is Mg(2+).

The protein localises to the cytoplasm. In terms of biological role, an essential GTPase which binds GTP, GDP and possibly (p)ppGpp with moderate affinity, with high nucleotide exchange rates and a fairly low GTP hydrolysis rate. Plays a role in control of the cell cycle, stress response, ribosome biogenesis and in those bacteria that undergo differentiation, in morphogenesis control. In Francisella tularensis subsp. tularensis (strain FSC 198), this protein is GTPase Obg.